The chain runs to 548 residues: Membrane protein insertase YidC (548 aa).

A helical transmembrane segment spans residues 6 to 26 (NLLVIALLFVSFMIWQAWEQD). The segment at 28–56 (NPQPQTQQTTQTTTTAAGSAADQGVPASG) is disordered. Residues 29-42 (PQPQTQQTTQTTTT) are compositionally biased toward low complexity. The next 4 helical transmembrane spans lie at 350-370 (FVGN…GIMY), 424-444 (FPLI…MGSI), 458-478 (LSAQ…MFFI), and 499-519 (PVIF…YYIV).

It belongs to the OXA1/ALB3/YidC family. Type 1 subfamily. In terms of assembly, interacts with the Sec translocase complex via SecD. Specifically interacts with transmembrane segments of nascent integral membrane proteins during membrane integration.

It is found in the cell inner membrane. In terms of biological role, required for the insertion and/or proper folding and/or complex formation of integral membrane proteins into the membrane. Involved in integration of membrane proteins that insert both dependently and independently of the Sec translocase complex, as well as at least some lipoproteins. Aids folding of multispanning membrane proteins. This chain is Membrane protein insertase YidC, found in Salmonella heidelberg (strain SL476).